A 115-amino-acid chain; its full sequence is Ribonuclease P protein component (115 aa).

The protein belongs to the RnpA family. As to quaternary structure, consists of a catalytic RNA component (M1 or rnpB) and a protein subunit.

It carries out the reaction Endonucleolytic cleavage of RNA, removing 5'-extranucleotides from tRNA precursor.. Functionally, RNaseP catalyzes the removal of the 5'-leader sequence from pre-tRNA to produce the mature 5'-terminus. It can also cleave other RNA substrates such as 4.5S RNA. The protein component plays an auxiliary but essential role in vivo by binding to the 5'-leader sequence and broadening the substrate specificity of the ribozyme. The polypeptide is Ribonuclease P protein component (Staphylococcus epidermidis (strain ATCC 35984 / DSM 28319 / BCRC 17069 / CCUG 31568 / BM 3577 / RP62A)).